The following is a 334-amino-acid chain: Endochitinase 3 (334 aa).

A signal peptide spans 1-23 (MRLLEFTALSSLLVLFLLLAVSA). In terms of domain architecture, Chitin-binding type-1 spans 24 to 65 (EQCGKQAGGARCPSGMCCSNFGWCGNTQDYCGPGKCQSQCPS). Disulfide bonds link Cys-26/Cys-41, Cys-35/Cys-47, Cys-40/Cys-54, and Cys-59/Cys-63. The disordered stretch occupies residues 64–84 (PSGPGPTPRPPTPTPGPSTGD). Over residues 66–79 (GPGPTPRPPTPTPG) the composition is skewed to pro residues. Pro-73, Pro-74, and Pro-76 each carry 4-hydroxyproline. Disulfide bonds link Cys-106-Cys-168, Cys-180-Cys-188, and Cys-287-Cys-319. Glu-150 serves as the catalytic Proton donor. The propeptide at 328–334 (GLLLETM) is removed in mature form.

It belongs to the glycosyl hydrolase 19 family. Chitinase class I subfamily. The 4-hydroxyproline residues are not glycosylated in this plant vacuolar protein.

Its subcellular location is the vacuole. The catalysed reaction is Random endo-hydrolysis of N-acetyl-beta-D-glucosaminide (1-&gt;4)-beta-linkages in chitin and chitodextrins.. Its function is as follows. Defense against chitin-containing fungal pathogens. The sequence is that of Endochitinase 3 (CHN14) from Nicotiana tabacum (Common tobacco).